A 122-amino-acid chain; its full sequence is Large ribosomal subunit protein uL14 (122 aa).

This sequence belongs to the universal ribosomal protein uL14 family. In terms of assembly, part of the 50S ribosomal subunit. Forms a cluster with proteins L3 and L19. In the 70S ribosome, L14 and L19 interact and together make contacts with the 16S rRNA in bridges B5 and B8.

Functionally, binds to 23S rRNA. Forms part of two intersubunit bridges in the 70S ribosome. This chain is Large ribosomal subunit protein uL14, found in Streptomyces avermitilis (strain ATCC 31267 / DSM 46492 / JCM 5070 / NBRC 14893 / NCIMB 12804 / NRRL 8165 / MA-4680).